Here is a 102-residue protein sequence, read N- to C-terminus: Large ribosomal subunit protein bL21 (102 aa).

Belongs to the bacterial ribosomal protein bL21 family. In terms of assembly, part of the 50S ribosomal subunit. Contacts protein L20.

This protein binds to 23S rRNA in the presence of protein L20. This is Large ribosomal subunit protein bL21 from Syntrophotalea carbinolica (strain DSM 2380 / NBRC 103641 / GraBd1) (Pelobacter carbinolicus).